Reading from the N-terminus, the 284-residue chain is MKKKIQIVQTLLDALPFIKKFRDEIFVIKYGGSAQTDQKLKEKFAQDILLLYTVGIKPVIVHGGGKRITEILNRLKIDTTFIDGQRVTTADVMEIVEMVLSGDINKEIVSLLNNHGAKAIGVSGKDAHFITARPKDFEKFGYTGVIDHIDPSVIHNLLQEQFVPVIAPIAASNQLGHPGYNINADLCASKVAGALKAKKIIFLTDTPGVLDKEGKLISTLTEEKIELLKKDGTISGGMIPKVDACLEAIDEGVEKAHIIDGRVEHSLLLEIFTSEGIGTQVLGG.

Residues 64 to 65, arginine 86, and asparagine 181 contribute to the substrate site; that span reads GG.

Belongs to the acetylglutamate kinase family. ArgB subfamily.

Its subcellular location is the cytoplasm. It carries out the reaction N-acetyl-L-glutamate + ATP = N-acetyl-L-glutamyl 5-phosphate + ADP. It participates in amino-acid biosynthesis; L-arginine biosynthesis; N(2)-acetyl-L-ornithine from L-glutamate: step 2/4. Functionally, catalyzes the ATP-dependent phosphorylation of N-acetyl-L-glutamate. The chain is Acetylglutamate kinase from Nitratiruptor sp. (strain SB155-2).